Reading from the N-terminus, the 364-residue chain is A-type ATP synthase subunit C (364 aa).

Belongs to the V-ATPase V0D/AC39 subunit family. As to quaternary structure, has multiple subunits with at least A(3), B(3), C, D, E, F, H, I and proteolipid K(x).

It localises to the cell membrane. Functionally, component of the A-type ATP synthase that produces ATP from ADP in the presence of a proton gradient across the membrane. This is A-type ATP synthase subunit C from Desulfurococcus sp. (strain SY).